The following is a 1434-amino-acid chain: Probable ATP-dependent RNA helicase spindle-E (1434 aa).

Positions leucine 125–valine 292 constitute a Helicase ATP-binding domain. Glycine 138–threonine 145 contacts ATP. A DEAH box motif is present at residues aspartate 238–histidine 241. Residues glutamine 354–asparagine 526 form the Helicase C-terminal domain. The Tudor domain occupies alanine 938 to glutamine 1001.

It belongs to the DEAD box helicase family. DEAH subfamily.

Its subcellular location is the cytoplasm. It is found in the perinuclear region. It localises to the cytoplasmic ribonucleoprotein granule. The catalysed reaction is ATP + H2O = ADP + phosphate + H(+). Its function is as follows. Probable ATP-binding RNA helicase which plays a central role during spermatogenesis and oogenesis by repressing transposable elements and preventing their mobilization, which is essential for the germline integrity. Acts via the piRNA metabolic process, which mediates the repression of transposable elements during meiosis by forming complexes composed of piRNAs and Piwi and govern the methylation and subsequent repression of transposons. Involved in the repression of LTR retrotransposon copia. Also involved in telomere regulation by repressing specialized telomeric retroelements HeT-A, TAHRE, and TART; Drosophila telomeres being maintained by transposition of specialized telomeric retroelements. Involved in telomeric trans-silencing, a repression mechanism by which a transposon or a transgene inserted in subtelomeric heterochromatin has the capacity to repress in trans in the female germline, a homologous transposon, or transgene located in euchromatin. Involved in the repression of testis-expressed Stellate genes by the homologous Su(Ste) repeats. Required for anteroposterior and dorsoventral axis formation during oogenesis. Key component of the perinuclear meiotic nuage, an electron dense structure involved in the post-transcriptional regulation of transposons and mRNAs; required for recruitment of other nuage comonents including vas, krimp, aub and mael. May have a role in production of piwi-interacting RNA (piRNA). The polypeptide is Probable ATP-dependent RNA helicase spindle-E (Drosophila melanogaster (Fruit fly)).